Here is a 55-residue protein sequence, read N- to C-terminus: Conotoxin Cal22d (55 aa).

A propeptide spanning residues 1 to 5 (GRPSA) is cleaved from the precursor.

Post-translationally, contains 4 disulfide bonds. Expressed by the venom duct.

It localises to the secreted. In terms of biological role, probable neurotoxin with unknown target. Possibly targets ion channels. The chain is Conotoxin Cal22d from Californiconus californicus (California cone).